A 415-amino-acid chain; its full sequence is Leucine-rich repeat-containing protein 34 (415 aa).

LRR repeat units follow at residues Thr246–Asn272 and Thr274–Thr296.

In terms of assembly, interacts with NPM1 and NCL.

The protein resides in the nucleus. It is found in the nucleolus. The protein localises to the cytoplasm. Highly expressed in stem cells where it may be involved in regulation of pluripotency. In embryonic stem cells (ESCs), important for normal expression of the pluripotency regulators POU5F1/OCT4 and KLF4. Also important for expression of the ectodermal marker gene NES and the endodermal marker gene GATA4. Promotes stem cell proliferation in vitro. The polypeptide is Leucine-rich repeat-containing protein 34 (Lrrc34) (Rattus norvegicus (Rat)).